A 388-amino-acid chain; its full sequence is Succinate--CoA ligase [ADP-forming] subunit beta (388 aa).

The region spanning 9–244 (KQLFARYGLP…QSQEDPREAQ (236 aa)) is the ATP-grasp domain. Residues Lys46, 53–55 (GRG), Glu99, Thr102, and Glu107 contribute to the ATP site. Asn199 and Asp213 together coordinate Mg(2+). Substrate-binding positions include Asn264 and 321 to 323 (GIV).

It belongs to the succinate/malate CoA ligase beta subunit family. Heterotetramer of two alpha and two beta subunits. It depends on Mg(2+) as a cofactor.

The catalysed reaction is succinate + ATP + CoA = succinyl-CoA + ADP + phosphate. The enzyme catalyses GTP + succinate + CoA = succinyl-CoA + GDP + phosphate. Its pathway is carbohydrate metabolism; tricarboxylic acid cycle; succinate from succinyl-CoA (ligase route): step 1/1. Functionally, succinyl-CoA synthetase functions in the citric acid cycle (TCA), coupling the hydrolysis of succinyl-CoA to the synthesis of either ATP or GTP and thus represents the only step of substrate-level phosphorylation in the TCA. The beta subunit provides nucleotide specificity of the enzyme and binds the substrate succinate, while the binding sites for coenzyme A and phosphate are found in the alpha subunit. This chain is Succinate--CoA ligase [ADP-forming] subunit beta, found in Escherichia coli O139:H28 (strain E24377A / ETEC).